Reading from the N-terminus, the 601-residue chain is Sodium-dependent phosphate transport protein 2C (601 aa).

Residues 1–75 (MPNSLAGDQV…HQVVSGFLKA (75 aa)) are Cytoplasmic-facing. Ser-4 is modified (phosphoserine). The helical transmembrane segment at 76 to 96 (CGLLGSLYFFICSLDILSSAF) threads the bilayer. The Extracellular portion of the chain corresponds to 97–110 (QLLGSKMAGDIFKD). Residues 111–131 (NVVLSNPVAGLVIGVVVTVLV) form a helical membrane-spanning segment. Residues 132-187 (QSSSTSSSIVVSMVASKSLTVQASVPIIMGVNVGTSITSTLVSMAQSGDRDEFQRA) lie on the Cytoplasmic side of the membrane. Residues 188-208 (FGGSAVHGIFNWLTVLVLLPL) traverse the membrane as a helical segment. Over 209-324 (ENATAALERL…FAGSELTDLA (116 aa)) the chain is Extracellular. N-linked (GlcNAc...) asparagine glycans are attached at residues Asn-210, Asn-264, Asn-267, and Asn-299. Residues Cys-275 and Cys-311 are joined by a disulfide bond. A helical transmembrane segment spans residues 325 to 345 (VGFILLAGSLLVLCVCLVLIV). The Cytoplasmic segment spans residues 346–369 (KLLNSVLRGRIAQAVKTVINADFP). Residues 370 to 390 (FPFGWLSGYLAILVGAGLTFL) form a helical membrane-spanning segment. Residues 391–447 (LQSSSVFTAAIVPLMGVGVINLERAYPLFLGSNIGTTTTALLAALASPADTLLFAVQ) are Extracellular-facing. A helical transmembrane segment spans residues 448-468 (VALIHFFFNLAGILLWYLVPV). Residues 469–487 (LRLPIPLAKRFGDLTAQYR) are Cytoplasmic-facing. The helical transmembrane segment at 488–508 (WVAIVYLLLTFLLLPLAAFGL) threads the bilayer. Over 509–512 (SLAG) the chain is Extracellular. A helical transmembrane segment spans residues 513–533 (GSVLAAVGGPLVGLVLLIILV). Residues 534-601 (NVLQRHRPSW…NPQVIASQQL (68 aa)) are Cytoplasmic-facing.

This sequence belongs to the SLC34A transporter family. As to expression, highly expressed in the kidney. Not found in any of the other tested tissues.

The protein localises to the apical cell membrane. The enzyme catalyses 2 Na(+)(out) + phosphate(out) = 2 Na(+)(in) + phosphate(in). In terms of biological role, involved in actively transporting phosphate into cells via Na(+) cotransport in the renal brush border membrane. The cotransport has a Na(+):Pi stoichiometry of 2:1 and is electroneutral. This chain is Sodium-dependent phosphate transport protein 2C (Slc34a3), found in Rattus norvegicus (Rat).